Reading from the N-terminus, the 231-residue chain is Fibronectin type III domain-containing protein 4 (231 aa).

Residues 1–40 form the signal peptide; the sequence is MPLAPPANSVETMASLMPLSPYLSPTVLLLVSCDLGFVRA. At 41–163 the chain is on the extracellular side; it reads DRPPSPVNVT…GLDGERPLQT (123 aa). The Fibronectin type-III domain occupies 43-136; that stretch reads PPSPVNVTVT…PRVHFRTLKG (94 aa). 2 N-linked (GlcNAc...) asparagine glycosylation sites follow: asparagine 48 and asparagine 143. Residues 118–156 are disordered; the sequence is GLRGESPPGPRVHFRTLKGSDRLPSNSSSPGDITVEGLD. A helical membrane pass occupies residues 164-184; sequence GEVVIIVVVLLMWAAVIGLFC. Residues 185–231 are Cytoplasmic-facing; sequence RQYDIIKDNDSNNNPKEKGKGPEQSPQGRPVGTTRQKKSPSINTIDV. Over residues 193 to 205 the composition is skewed to basic and acidic residues; sequence NDSNNNPKEKGKG. Residues 193 to 231 form a disordered region; sequence NDSNNNPKEKGKGPEQSPQGRPVGTTRQKKSPSINTIDV.

Predominantly expressed in the liver and in the brain, including in the cortex, hypothalamus and hippocampus. Also expressed in heart, lung, kidney and testis. In the colon, expressed in the epithelium and in a subset of immune cells in lymphoid aggregates.

It is found in the membrane. Its subcellular location is the secreted. In terms of biological role, has anti-inflammatory properties. In the colon, acts on macrophages to down-regulate inflammation. May suppress osteoclastogenesis and mature osteoclast resorptive function. In white adipose tissue, decreases local inflammation, via interaction with GPR116. Also required for proper systemic glucose tolerance, specifically sensitizing white adipocytes to insulin and promoting glucose uptake. The insulin sensitizing function in adipose tissue is mediated by interaction with ADGRF5/GPR116 and activation of cAMP signaling. The sequence is that of Fibronectin type III domain-containing protein 4 (Fndc4) from Mus musculus (Mouse).